The sequence spans 117 residues: MGVWSVVLYLLNTLIVPFRDERAKFEIERVSAEEAKKIIQMHNSQFVSAIGHSASANALSLLLGVAVPVNRTEVFFNVGDEAIAMALKKRLAEGQVLRTVQELEAVGFDLYYIKRVQ.

This is an uncharacterized protein from Acidianus two-tailed virus (ATV).